Here is a 174-residue protein sequence, read N- to C-terminus: Cytochrome c-type biogenesis protein CcmE (174 aa).

The Cytoplasmic segment spans residues 1 to 7 (MTRKSRR). A helical; Signal-anchor for type II membrane protein membrane pass occupies residues 8–28 (LILIGAGLGVLALAAGLILTA). Over 29–174 (LNDTIVFFRT…PAVSPARSTP (146 aa)) the chain is Periplasmic. The heme site is built by histidine 121 and tyrosine 125. A compositionally biased stretch (basic and acidic residues) spans 130–144 (VADALKKSGHWKEGE). A disordered region spans residues 130–174 (VADALKKSGHWKEGEEGGPVPPAAKTPGPQSSAAPPAVSPARSTP). Low complexity predominate over residues 156 to 174 (PGPQSSAAPPAVSPARSTP).

It belongs to the CcmE/CycJ family.

It localises to the cell inner membrane. Functionally, heme chaperone required for the biogenesis of c-type cytochromes. Transiently binds heme delivered by CcmC and transfers the heme to apo-cytochromes in a process facilitated by CcmF and CcmH. This Azorhizobium caulinodans (strain ATCC 43989 / DSM 5975 / JCM 20966 / LMG 6465 / NBRC 14845 / NCIMB 13405 / ORS 571) protein is Cytochrome c-type biogenesis protein CcmE.